Reading from the N-terminus, the 494-residue chain is Sulfate adenylyltransferase subunit 1 (494 aa).

The tr-type G domain maps to 24-240 (TRPLRLITCG…LELATVRSAQ (217 aa)). The interval 33-40 (GSVDDGKS) is G1. A GTP-binding site is contributed by 33-40 (GSVDDGKS). A G2 region spans residues 91 to 95 (GITID). Residues 112–115 (DTPG) are G3. GTP-binding positions include 112 to 116 (DTPGH) and 167 to 170 (NKID). The G4 stretch occupies residues 167-170 (NKID). The G5 stretch occupies residues 204–206 (SAL).

The protein belongs to the TRAFAC class translation factor GTPase superfamily. Classic translation factor GTPase family. CysN/NodQ subfamily. As to quaternary structure, heterodimer composed of CysD, the smaller subunit, and CysN.

It catalyses the reaction sulfate + ATP + H(+) = adenosine 5'-phosphosulfate + diphosphate. It participates in sulfur metabolism; hydrogen sulfide biosynthesis; sulfite from sulfate: step 1/3. With CysD forms the ATP sulfurylase (ATPS) that catalyzes the adenylation of sulfate producing adenosine 5'-phosphosulfate (APS) and diphosphate, the first enzymatic step in sulfur assimilation pathway. APS synthesis involves the formation of a high-energy phosphoric-sulfuric acid anhydride bond driven by GTP hydrolysis by CysN coupled to ATP hydrolysis by CysD. The protein is Sulfate adenylyltransferase subunit 1 of Rhizobium rhizogenes (strain K84 / ATCC BAA-868) (Agrobacterium radiobacter).